A 271-amino-acid chain; its full sequence is 2-aminophenol 1,6-dioxygenase alpha subunit (271 aa).

This sequence belongs to the LigB/MhpB extradiol dioxygenase family. As to quaternary structure, heterotetramer of 2 alpha and 2 beta subunits.

In terms of biological role, component of the 2-aminophenol 1,6-dioxygenase complex that catalyzes the ring fission of 2-aminophenol to produce 2-aminomuconic 6-semialdehyde. AmnA seems to have a role in the stability of the complex. The polypeptide is 2-aminophenol 1,6-dioxygenase alpha subunit (amnA) (Pseudomonas sp).